The sequence spans 212 residues: MTTETFVKDIKPGLKNLNLIFIVLETGRVTKTKDGHEVRTCKVADKTGSINISVWDDVGNLIQPGDIIRLTKGYASVFKGCLTLYTGRGGDLQKIGEFCMVYSEVPNFSEPNPEYNTQQAPNKSVQNNDNSPTAPQATTGPPAASPASENQNGNGLSTQLGPVGGPHPSHTPSHPPSTRITRSQPNHTPSGPPGPSSNPVSNGKETRRSSKR.

Positions 22–92 (IVLETGRVTK…TLYTGRGGDL (71 aa)) form a DNA-binding region, OB. Residues 110-212 (EPNPEYNTQQ…GKETRRSSKR (103 aa)) are disordered. A compositionally biased stretch (polar residues) spans 114–130 (EYNTQQAPNKSVQNNDN). Phosphothreonine; by ATM is present on Thr117. A compositionally biased stretch (low complexity) spans 131 to 148 (SPTAPQATTGPPAASPAS). Over residues 149–160 (ENQNGNGLSTQL) the composition is skewed to polar residues. Low complexity predominate over residues 166-178 (PHPSHTPSHPPST).

It belongs to the SOSS-B family. SOSS-B1 subfamily. As to quaternary structure, component of the SOSS complex, composed of SOSS-B (SOSS-B1/NABP2 or SOSS-B2/NABP1), SOSS-A/INTS3 and SOSS-C/INIP. SOSS complexes containing SOSS-B1/NABP2 are more abundant than complexes containing SOSS-B2/NABP1. Directly interacts with ATM, SOSS-A/INTS3 and RAD51. Interacts with INTS7. Phosphorylated by ATM in response to DNA damage. Phosphorylation prevents degradation by the proteasome, hence stabilization of the protein and accumulation within cells. In terms of processing, ubiquitinated in a FBXL5-dependent manner, leading to proteasomal degradation.

Its subcellular location is the nucleus. Functionally, component of the SOSS complex, a multiprotein complex that functions downstream of the MRN complex to promote DNA repair and G2/M checkpoint. In the SOSS complex, acts as a sensor of single-stranded DNA that binds to single-stranded DNA, in particular to polypyrimidines. The SOSS complex associates with DNA lesions and influences diverse endpoints in the cellular DNA damage response including cell-cycle checkpoint activation, recombinational repair and maintenance of genomic stability. Required for efficient homologous recombination-dependent repair of double-strand breaks (DSBs) and ATM-dependent signaling pathways. The protein is SOSS complex subunit B1 (Nabp2) of Mus musculus (Mouse).